The primary structure comprises 599 residues: Nucleosomal histone kinase 1 (599 aa).

The 282-residue stretch at W47–F328 folds into the Protein kinase domain. ATP contacts are provided by residues I53–I61 and K77. Residue D183 is the Proton acceptor of the active site. 2 disordered regions span residues N340 to R507 and R532 to G599. Polar residues predominate over residues P349–G361. Residues S376, S381, S382, S388, and S390 each carry the phosphoserine modification. A compositionally biased stretch (basic and acidic residues) spans V435 to T448. Phosphoserine is present on S483. Residues S546 to S558 show a composition bias toward low complexity. 2 positions are modified to phosphoserine: S564 and S586. T589 is subject to Phosphothreonine.

It belongs to the protein kinase superfamily. CK1 Ser/Thr protein kinase family. VRK subfamily. May interact with Unc-89 (via protein kinase domain 1). Interacts with L(2)gl. Mg(2+) is required as a cofactor. Post-translationally, phosphorylated during mitosis and female meiosis. In terms of tissue distribution, expressed in ovaries (at protein level). Expressed in indirect flight muscle (IFM) (at protein level).

The protein resides in the cytoplasm. The protein localises to the nucleus. It is found in the chromosome. Its subcellular location is the myofibril. It localises to the sarcomere. The protein resides in the z line. The protein localises to the m line. The catalysed reaction is L-seryl-[protein] + ATP = O-phospho-L-seryl-[protein] + ADP + H(+). It carries out the reaction L-threonyl-[protein] + ATP = O-phospho-L-threonyl-[protein] + ADP + H(+). Functionally, serine/threonine-protein kinase involved in somatic mitosis and female meiosis. Required for spindle organization in mitosis, and for the establishment or maintenance of meiosis-specific chromosomal configurations, including the prophase I karyosome and the metaphase I spindle. Specifically phosphorylates nucleosomal H2A on 'Thr-119'. Required for the development and organization of indirect flight muscle sarcomeres by regulating the formation of M line and H zone and the correct assembly of thick and thin filaments in the sarcomere. The sequence is that of Nucleosomal histone kinase 1 (ball) from Drosophila melanogaster (Fruit fly).